Here is a 218-residue protein sequence, read N- to C-terminus: Protein THO1 (218 aa).

The SAP domain occupies 4–38; it reads YSSLTVVQLKDLLTKRNLSVGGLKNELVQRLIKDD. At Ser22 the chain carries Phosphoserine. 2 disordered regions span residues 37 to 123 and 177 to 218; these read DDEE…LSPE and LVSR…GYRR. Positions 47-57 are enriched in polar residues; that stretch reads VSPQEQNQEQG. Phosphoserine is present on residues Ser58 and Ser68. The span at 72-96 shows a compositional bias: basic and acidic residues; sequence TEKKEVSSEPKETNEPKEENKDVQK. 2 stretches are compositionally biased toward low complexity: residues 102 to 122 and 186 to 203; these read SATA…ALSP and SGNN…NNRS. Residues 204-218 show a composition bias toward basic residues; that stretch reads RVSKNRRGNRSGYRR.

The protein belongs to the SAP domain-containing ribonucleoprotein family. Interacts with SUB2 in the presence of RNA; this interaction facilitates RNA binding of SUB2.

In terms of biological role, facilitates RNA binding of SUB2 and likely plays a role in mRNA export. Suppressor of the transcriptional defect of HPR1 by overexpression. This Saccharomyces cerevisiae (strain ATCC 204508 / S288c) (Baker's yeast) protein is Protein THO1 (THO1).